The chain runs to 295 residues: ATP synthase gamma chain (295 aa).

This sequence belongs to the ATPase gamma chain family. As to quaternary structure, F-type ATPases have 2 components, CF(1) - the catalytic core - and CF(0) - the membrane proton channel. CF(1) has five subunits: alpha(3), beta(3), gamma(1), delta(1), epsilon(1). CF(0) has three main subunits: a, b and c.

It localises to the cell inner membrane. Functionally, produces ATP from ADP in the presence of a proton gradient across the membrane. The gamma chain is believed to be important in regulating ATPase activity and the flow of protons through the CF(0) complex. The protein is ATP synthase gamma chain of Campylobacter curvus (strain 525.92).